The following is a 196-amino-acid chain: dCTP deaminase (196 aa).

Residues 113–118 (RSSLAR), Asp-131, 139–141 (VLE), Tyr-174, Lys-181, and Gln-185 each bind dCTP. Residue Glu-141 is the Proton donor/acceptor of the active site.

This sequence belongs to the dCTP deaminase family. Homotrimer.

It carries out the reaction dCTP + H2O + H(+) = dUTP + NH4(+). It functions in the pathway pyrimidine metabolism; dUMP biosynthesis; dUMP from dCTP (dUTP route): step 1/2. Functionally, catalyzes the deamination of dCTP to dUTP. The sequence is that of dCTP deaminase from Wigglesworthia glossinidia brevipalpis.